Reading from the N-terminus, the 396-residue chain is Putative N(4)-(beta-N-acetylglucosaminyl)-L-asparaginase GG24090 (396 aa).

Residues 1 to 23 form the signal peptide; sequence MKRHLGTCLWVLCLASTAFSSLA. 2 disulfides stabilise this stretch: Cys-100–Cys-105 and Cys-199–Cys-215. Catalysis depends on Thr-246, which acts as the Nucleophile. Substrate-binding positions include 274 to 277 and 297 to 300; these read RVGD and TGDG. A disulfide bridge links Cys-357 with Cys-384.

It belongs to the Ntn-hydrolase family. As to quaternary structure, heterotetramer of two alpha and two beta chains arranged as a dimer of alpha/beta heterodimers. Cleaved into an alpha and beta chain by autocatalysis; this activates the enzyme. The N-terminal residue of the beta subunit is responsible for the nucleophile hydrolase activity.

It carries out the reaction N(4)-(beta-N-acetyl-D-glucosaminyl)-L-asparagine + H2O = N-acetyl-beta-D-glucosaminylamine + L-aspartate + H(+). In terms of biological role, cleaves the GlcNAc-Asn bond which joins oligosaccharides to the peptide of asparagine-linked glycoproteins. The sequence is that of Putative N(4)-(beta-N-acetylglucosaminyl)-L-asparaginase GG24090 from Drosophila erecta (Fruit fly).